A 456-amino-acid chain; its full sequence is Armadillo repeat-containing X-linked protein 1 (456 aa).

Over 1 to 6 (MGRTRE) the chain is Mitochondrial intermembrane. Mitochondrion outer membrane (MOM)-targeting sequence stretches follow at residues 1-6 (MGRTRE) and 26-36 (RLTWGKDENEK). The chain crosses the membrane as a helical; Signal-anchor span at residues 7–29 (AGCVAAGMVIGAGACYCVYRLTW). Over 30 to 456 (GKDENEKLWD…VKVLKVLTKL (427 aa)) the chain is Cytoplasmic. Disordered regions lie at residues 37 to 106 (LWDE…SGGG) and 139 to 186 (RTLT…APAT). A compositionally biased stretch (acidic residues) spans 38-50 (WDEEEEEEEEEEE). 2 stretches are compositionally biased toward basic and acidic residues: residues 51–62 (KSCSDKTEKELK) and 72–81 (KPQDDSKSKV). Over residues 162–180 (SRARNRTSGKVKRKNRSKS) the composition is skewed to basic residues. ARM repeat units follow at residues 198–238 (PYKI…NNAA), 240–279 (SFNQ…NLSV), 361–401 (PAMT…NIND), and 418–456 (SSLF…LTKL).

This sequence belongs to the eutherian X-chromosome-specific Armcx family. In terms of assembly, interacts with MIRO1. Widely expressed in the adult nervous tissue, especially in the forebrain, including the cerebral cortex, hippocampus and thalamus.

The protein resides in the mitochondrion. It localises to the mitochondrion outer membrane. In terms of biological role, regulates mitochondrial transport during axon regeneration. Increases the proportion of motile mitochondria by recruiting stationary mitochondria into the motile pool. Enhances mitochondria movement and neurite growth in both adult axons and embryonic neurons. Promotes neuronal survival and axon regeneration after nerve injury. May link mitochondria to the Trak1-kinesin motor complex via its interaction with Miro1. This chain is Armadillo repeat-containing X-linked protein 1 (Armcx1), found in Mus musculus (Mouse).